A 953-amino-acid chain; its full sequence is Protein ENHANCER OF LHP1 1 (953 aa).

WD repeat units lie at residues 15 to 55 (GGSA…TLPP), 60 to 99 (HHQDGVTSLALSNDSTLLASGSIDHCVKLYKFPSGEFQTN), 102 to 143 (RFTL…RVLK), 144 to 183 (GHKGPVTGLDFHPNGELLASIDTTGTVLCWELQNGVVSFT), 192 to 232 (GFNT…KLFA), 236 to 275 (DHLEAICYLTWAPNGKYIATSGLDKQVLLWDVDKKQDIDR), and 277 to 316 (KFEERICCMSWKPNGNALSVIDAKGRYGVWESLVPSSMLS). 3 disordered regions span residues 347 to 370 (SESLDDAMGDSDDGESHHTSRKRL), 385 to 419 (EELNDGSSLPSASEYRKKSHRGHREKQGARSGAFK), and 851 to 877 (ESKVQNPPASIQTSENTEAVMKSSATK). Positions 349–359 (SLDDAMGDSDD) are enriched in acidic residues. Residues 853–877 (KVQNPPASIQTSENTEAVMKSSATK) show a composition bias toward polar residues. The Nuclear localization signal signature appears at 900–907 (TKKDKSDD). The tract at residues 919–953 (KNPVNNVNKEDKGQEKEVNQGEARRSSNPFLKSTV) is disordered. The segment covering 926–943 (NKEDKGQEKEVNQGEARR) has biased composition (basic and acidic residues). A compositionally biased stretch (polar residues) spans 944–953 (SSNPFLKSTV).

Interacts with EZA1/SWN, LHP1, SLD5 and CLF in the nucleus. As to expression, expressed in root meristematic zones, initiating lateral roots, young leaves and the shoot apex.

It is found in the nucleus. Its function is as follows. Participates in maintaining the H3K27me3 mark at target genes by interacting with LHP1-PRC2 complexes during replication, thus contributing to H3K27me3 inheritance. This is Protein ENHANCER OF LHP1 1 from Arabidopsis thaliana (Mouse-ear cress).